The sequence spans 496 residues: Glycerol kinase (496 aa).

Thr12 is a binding site for ADP. Residues Thr12, Thr13, and Ser14 each coordinate ATP. Thr12 is a sn-glycerol 3-phosphate binding site. Position 16 (Arg16) interacts with ADP. 3 residues coordinate sn-glycerol 3-phosphate: Arg82, Glu83, and Tyr134. The glycerol site is built by Arg82, Glu83, and Tyr134. His230 is modified (phosphohistidine; by HPr). Asp244 contributes to the sn-glycerol 3-phosphate binding site. Residues Asp244 and Gln245 each contribute to the glycerol site. Residues Thr266 and Gly309 each coordinate ADP. Thr266, Gly309, Gln313, and Gly410 together coordinate ATP. The ADP site is built by Gly410 and Asn414.

Belongs to the FGGY kinase family. In terms of assembly, homotetramer and homodimer (in equilibrium). In terms of processing, the phosphoenolpyruvate-dependent sugar phosphotransferase system (PTS), including enzyme I, and histidine-containing protein (HPr) are required for the phosphorylation, which leads to the activation of the enzyme.

The catalysed reaction is glycerol + ATP = sn-glycerol 3-phosphate + ADP + H(+). It participates in polyol metabolism; glycerol degradation via glycerol kinase pathway; sn-glycerol 3-phosphate from glycerol: step 1/1. Its activity is regulated as follows. Activated by phosphorylation and inhibited by fructose 1,6-bisphosphate (FBP). Functionally, key enzyme in the regulation of glycerol uptake and metabolism. Catalyzes the phosphorylation of glycerol to yield sn-glycerol 3-phosphate. In Bacillus cereus (strain ATCC 14579 / DSM 31 / CCUG 7414 / JCM 2152 / NBRC 15305 / NCIMB 9373 / NCTC 2599 / NRRL B-3711), this protein is Glycerol kinase.